The primary structure comprises 499 residues: L-arabinose isomerase (499 aa).

Mn(2+) is bound by residues E306, E333, H350, and H449.

Belongs to the arabinose isomerase family. Mn(2+) serves as cofactor.

The catalysed reaction is beta-L-arabinopyranose = L-ribulose. It participates in carbohydrate degradation; L-arabinose degradation via L-ribulose; D-xylulose 5-phosphate from L-arabinose (bacterial route): step 1/3. Functionally, catalyzes the conversion of L-arabinose to L-ribulose. In Aeromonas salmonicida (strain A449), this protein is L-arabinose isomerase.